Reading from the N-terminus, the 596-residue chain is Inactive metallocarboxypeptidase ECM14 (596 aa).

Residues 1 to 22 form the signal peptide; the sequence is MHFSVRLSLFLTLASSLPLVSA. Positions 23–184 are excised as a propeptide; it reads VPQHEDQAYT…QTIYESYPKA (162 aa). The interval 182 to 211 is disordered; it reads PKAGSASPSQQGPTTRRFSPSASTSKSKPH. Residues 187–207 are compositionally biased toward polar residues; it reads ASPSQQGPTTRRFSPSASTSK. In terms of domain architecture, Peptidase M14 spans 220 to 546; the sequence is DYQPLSVLLP…RAMVAMGKFL (327 aa). The Zn(2+) site is built by histidine 285 and glutamate 288. Residues 285-288, arginine 343, and 360-361 each bind substrate; these read HARE and DH. A disulfide bridge links cysteine 354 with cysteine 377. An N-linked (GlcNAc...) asparagine glycan is attached at asparagine 370. Histidine 417 is a binding site for Zn(2+). Substrate is bound at residue 418 to 419; sequence SY. A disordered region spans residues 557–596; the sequence is DGLRASEEPQDYDNDLEDGEDDKDEQGSTVFRAQADDLQS. The segment covering 564 to 580 has biased composition (acidic residues); sequence EPQDYDNDLEDGEDDKD. The segment covering 583-596 has biased composition (polar residues); the sequence is GSTVFRAQADDLQS.

This sequence belongs to the peptidase M14 family. Zn(2+) serves as cofactor.

The protein resides in the vacuole. The protein localises to the secreted. In terms of biological role, inactive carboxypeptidase that may play a role in cell wall organization and biogenesis. The polypeptide is Inactive metallocarboxypeptidase ECM14 (ECM14) (Arthroderma benhamiae (strain ATCC MYA-4681 / CBS 112371) (Trichophyton mentagrophytes)).